Here is a 649-residue protein sequence, read N- to C-terminus: Cysteine-rich receptor-like protein kinase 2 (649 aa).

The signal sequence occupies residues 1-29 (MKKEPVHILPLYLPCLLMFLLSSLRQITG). Topologically, residues 30–258 (DARARAVKVT…IPRNGRSRGS (229 aa)) are extracellular. Gnk2-homologous domains lie at 33 to 134 (ARAV…NYSF) and 139 to 245 (KGPE…DQDF). Residues Asn47, Asn131, Asn149, Asn154, and Asn214 are each glycosylated (N-linked (GlcNAc...) asparagine). Residues 259–279 (VVVIVVSVLSSVVVFMIGVAV) traverse the membrane as a helical segment. Over 280 to 649 (SVYICKRRTI…TVSQSSFYGR (370 aa)) the chain is Cytoplasmic. The Protein kinase domain maps to 325–608 (FDNANKLGQG…HMLKNKEEVL (284 aa)). Residues 331–339 (LGQGGFGTV) and Lys353 each bind ATP. Position 398 is a phosphotyrosine (Tyr398). Asp450 (proton acceptor) is an active-site residue. 2 positions are modified to phosphoserine: Ser454 and Ser483. A phosphothreonine mark is found at Thr484 and Thr489. Tyr497 bears the Phosphotyrosine mark.

Belongs to the protein kinase superfamily. Ser/Thr protein kinase family. CRK subfamily.

It localises to the membrane. It carries out the reaction L-seryl-[protein] + ATP = O-phospho-L-seryl-[protein] + ADP + H(+). The enzyme catalyses L-threonyl-[protein] + ATP = O-phospho-L-threonyl-[protein] + ADP + H(+). The polypeptide is Cysteine-rich receptor-like protein kinase 2 (CRK2) (Arabidopsis thaliana (Mouse-ear cress)).